Here is a 182-residue protein sequence, read N- to C-terminus: Ribosomal RNA small subunit methyltransferase G (182 aa).

Residues G58, F63, 109-110 (IE), and R123 each bind S-adenosyl-L-methionine.

This sequence belongs to the methyltransferase superfamily. RNA methyltransferase RsmG family.

The protein localises to the cytoplasm. It catalyses the reaction guanosine(527) in 16S rRNA + S-adenosyl-L-methionine = N(7)-methylguanosine(527) in 16S rRNA + S-adenosyl-L-homocysteine. In terms of biological role, specifically methylates the N7 position of guanine in position 527 of 16S rRNA. The chain is Ribosomal RNA small subunit methyltransferase G from Campylobacter fetus subsp. fetus (strain 82-40).